A 79-amino-acid polypeptide reads, in one-letter code: Acyl carrier protein (79 aa).

The 76-residue stretch at 2–77 (ESIEQRVKKI…QAVDYINSHG (76 aa)) folds into the Carrier domain. Ser37 carries the post-translational modification O-(pantetheine 4'-phosphoryl)serine.

The protein belongs to the acyl carrier protein (ACP) family. Post-translationally, 4'-phosphopantetheine is transferred from CoA to a specific serine of apo-ACP by AcpS. This modification is essential for activity because fatty acids are bound in thioester linkage to the sulfhydryl of the prosthetic group.

It is found in the cytoplasm. It functions in the pathway lipid metabolism; fatty acid biosynthesis. Its function is as follows. Carrier of the growing fatty acid chain in fatty acid biosynthesis. The protein is Acyl carrier protein of Bordetella parapertussis (strain 12822 / ATCC BAA-587 / NCTC 13253).